We begin with the raw amino-acid sequence, 513 residues long: Keratin, type II cuticular Hb2 (513 aa).

Residues 1 to 120 form a head region; that stretch reads MSYHSFQPGS…PTVQRVKRDE (120 aa). The region spanning 120-431 is the IF rod domain; that stretch reads EKEQIKCLNN…RLLEGEEHRL (312 aa). The tract at residues 121-155 is coil 1A; it reads KEQIKCLNNRFASFINKVRFLEQKNKLLETKWNFM. The tract at residues 156–165 is linker 1; it reads QQQRCCQTNI. The tract at residues 166–266 is coil 1B; the sequence is EPIFEGYISA…YEEEICLLQS (101 aa). Residues 267–283 form a linker 12 region; it reads QISETSVIVKMDNSREL. Positions 284-427 are coil 2; that stretch reads DVDGIIAEIK…ATYRRLLEGE (144 aa). Residues 428 to 513 form a tail region; that stretch reads EHRLCEGIGP…AGGSSPSHKH (86 aa).

This sequence belongs to the intermediate filament family. As to quaternary structure, heterotetramer of two type I and two type II keratins.

This chain is Keratin, type II cuticular Hb2 (KRT82), found in Homo sapiens (Human).